Reading from the N-terminus, the 79-residue chain is Acyl carrier protein (79 aa).

The Carrier domain occupies S2–Q77. S37 is modified (O-(pantetheine 4'-phosphoryl)serine).

Belongs to the acyl carrier protein (ACP) family. 4'-phosphopantetheine is transferred from CoA to a specific serine of apo-ACP by AcpS. This modification is essential for activity because fatty acids are bound in thioester linkage to the sulfhydryl of the prosthetic group.

Its subcellular location is the cytoplasm. Its pathway is lipid metabolism; fatty acid biosynthesis. Its function is as follows. Carrier of the growing fatty acid chain in fatty acid biosynthesis. The protein is Acyl carrier protein of Variovorax paradoxus (strain S110).